The chain runs to 458 residues: (R)-6-hydroxynicotine oxidase (458 aa).

One can recognise an FAD-binding PCMH-type domain in the interval 33-204 (RHLQRPSLIA…TEVEVQLYEL (172 aa)). Residues 67 to 73 (RSGGHNP), 129 to 130 (HP), 134 to 137 (FCGL), G144, T195, N413, and N450 each bind FAD. A Pros-8alpha-FAD histidine modification is found at H71.

Belongs to the oxygen-dependent FAD-linked oxidoreductase family. In terms of assembly, monomer. Requires FAD as cofactor.

The protein localises to the cytoplasm. It carries out the reaction (R)-6-hydroxynicotine + O2 + H2O = 6-hydroxypseudooxynicotine + H2O2. The catalysed reaction is (R)-6-hydroxynicotine + O2 = 6-hydroxy-N-methylmyosmine + H2O2. It participates in alkaloid degradation; nicotine degradation; 6-hydroxypseudooxynicotine from nicotine (R-isomer route): step 2/2. Inhibited by (S)-6-hydroxynicotine. Inhibited by high concentrations of phenanthroline. Its function is as follows. Involved in the degradation of D-nicotine. Catalyzes the oxidation of (R)-6-hydroxynicotine (6-hydroxy-D-nicotine) to 6-hydroxypseudooxynicotine. Oxidation of the pyrrolidine ring of (R)-6-hydroxynicotine leads to the formation of the optically inactive 6-hydroxy-N-methylmyosmine, which hydrolyzes spontaneously to 6-hydroxypseudooxynicotine. Acts with absolute stereospecificity on the D-form of 6-hydroxynicotine. Shows lower activity with (R)-6-hydroxynornicotine, and weak activity with (R)-4-(1-methylpyrrolidine-2-yl)phenol, (R)-6-chloronicotine and (R)-nicotine. The polypeptide is (R)-6-hydroxynicotine oxidase (Paenarthrobacter nicotinovorans (Arthrobacter nicotinovorans)).